A 531-amino-acid chain; its full sequence is Histone-arginine methyltransferase CARMER (531 aa).

One can recognise an SAM-dependent MTase PRMT-type domain in the interval 141–450 (ASQYFQFYGY…QSYDVTIDLH (310 aa)). S-adenosyl-L-methionine is bound by residues Q154, R163, G187, E209, E238, and T266. The residue at position 501 (R501) is an Asymmetric dimethylarginine; by autocatalysis.

The protein belongs to the class I-like SAM-binding methyltransferase superfamily. Protein arginine N-methyltransferase family. Homodimer. The dimethylated protein is the major form.

Its subcellular location is the cytoplasm. It localises to the nucleus. It catalyses the reaction L-arginyl-[protein] + 2 S-adenosyl-L-methionine = N(omega),N(omega)-dimethyl-L-arginyl-[protein] + 2 S-adenosyl-L-homocysteine + 2 H(+). Functionally, methylates (mono- and asymmetric dimethylation) the guanidino nitrogens of arginyl residues in proteins. May methylate histone H3 at 'Arg-17' and activate transcription via chromatin remodeling. The chain is Histone-arginine methyltransferase CARMER (Art4) from Drosophila ananassae (Fruit fly).